An 890-amino-acid chain; its full sequence is Alanine--tRNA ligase (890 aa).

Zn(2+) is bound by residues histidine 569, histidine 573, cysteine 671, and histidine 675.

The protein belongs to the class-II aminoacyl-tRNA synthetase family. Zn(2+) is required as a cofactor.

The protein resides in the cytoplasm. It catalyses the reaction tRNA(Ala) + L-alanine + ATP = L-alanyl-tRNA(Ala) + AMP + diphosphate. Catalyzes the attachment of alanine to tRNA(Ala) in a two-step reaction: alanine is first activated by ATP to form Ala-AMP and then transferred to the acceptor end of tRNA(Ala). Also edits incorrectly charged Ser-tRNA(Ala) and Gly-tRNA(Ala) via its editing domain. This chain is Alanine--tRNA ligase, found in Synechococcus sp. (strain CC9902).